Here is a 335-residue protein sequence, read N- to C-terminus: NAC domain-containing protein 87 (335 aa).

An NAC domain is found at 21 to 172 (LPPGFRFHPT…EWVVCRVFHK (152 aa)). The DNA-binding element occupies 119–178 (VGMKKTLVFYRGRAPKGEKTNWVMHEYRLEGKYSYYNLPKSARDEWVVCRVFHKNNPSTT).

The protein localises to the nucleus. Its function is as follows. Binds to the promoter regions of genes involved in chlorophyll catabolic processes, such as NYC1, SGR1, SGR2 and PAO. The chain is NAC domain-containing protein 87 from Arabidopsis thaliana (Mouse-ear cress).